A 584-amino-acid polypeptide reads, in one-letter code: Protein BONZAI 3 (584 aa).

The tract at residues 1–23 (MGGCLSGDVKGGKQAIGGVQQRP) is disordered. Residue Gly-2 is the site of N-myristoyl glycine attachment. 2 C2 domains span residues 34 to 167 (HNDA…TLTL) and 178 to 305 (NRNL…NFVY). Asp-67, Asp-73, Asp-126, Asp-128, and Asp-145 together coordinate Ca(2+). Residues 344-563 (NFMVAVDFTA…SVVQALLEEL (220 aa)) enclose the VWFA domain.

The protein belongs to the copine family. As to quaternary structure, interacts with BAP1 and BAP2. Ca(2+) serves as cofactor. In terms of tissue distribution, expressed at an extremely low level.

The protein resides in the cell membrane. Negative regulator of cell death and defense responses. Repress a number of R genes and may have effects in promoting growth and development. May function in membrane trafficking and in fusion of vesicles with plasma membrane. The protein is Protein BONZAI 3 (BON3) of Arabidopsis thaliana (Mouse-ear cress).